A 124-amino-acid chain; its full sequence is Small ribosomal subunit protein uS12 (124 aa).

The residue at position 89 (Asp89) is a 3-methylthioaspartic acid.

Belongs to the universal ribosomal protein uS12 family. As to quaternary structure, part of the 30S ribosomal subunit. Contacts proteins S8 and S17. May interact with IF1 in the 30S initiation complex.

With S4 and S5 plays an important role in translational accuracy. In terms of biological role, interacts with and stabilizes bases of the 16S rRNA that are involved in tRNA selection in the A site and with the mRNA backbone. Located at the interface of the 30S and 50S subunits, it traverses the body of the 30S subunit contacting proteins on the other side and probably holding the rRNA structure together. The combined cluster of proteins S8, S12 and S17 appears to hold together the shoulder and platform of the 30S subunit. The sequence is that of Small ribosomal subunit protein uS12 from Shewanella piezotolerans (strain WP3 / JCM 13877).